We begin with the raw amino-acid sequence, 226 residues long: V-type proton ATPase subunit E (226 aa).

The protein belongs to the V-ATPase E subunit family. As to quaternary structure, V-ATPase is a heteromultimeric enzyme made up of two complexes: the ATP-hydrolytic V1 complex and the proton translocation V0 complex. The V1 complex consists of three catalytic AB heterodimers that form a heterohexamer, three peripheral stalks each consisting of EG heterodimers, one central rotor including subunits D and F, and the regulatory subunits C and H. The proton translocation complex V0 consists of the proton transport subunit a, a ring of proteolipid subunits c9c'', rotary subunit d, subunits e and f, and the accessory subunits VhaAC45 and ATP6AP2.

Its function is as follows. Subunit of the V1 complex of vacuolar(H+)-ATPase (V-ATPase), a multisubunit enzyme composed of a peripheral complex (V1) that hydrolyzes ATP and a membrane integral complex (V0) that translocates protons. V-ATPase is responsible for acidifying and maintaining the pH of intracellular compartments and in some cell types, is targeted to the plasma membrane, where it is responsible for acidifying the extracellular environment. The chain is V-type proton ATPase subunit E (Vha26) from Drosophila melanogaster (Fruit fly).